The following is a 204-amino-acid chain: Sex-determining region Y protein (204 aa).

Residues 59 to 136 (RVKRPMNAFI…YKYRPRRKAK (78 aa)) are sufficient for interaction with KPNB1. A DNA-binding region (HMG box) is located at residues 60–128 (VKRPMNAFIV…MHREKYPNYK (69 aa)). Required for nuclear localization stretches follow at residues 61 to 77 (KRPM…QRRK) and 130 to 136 (RPRRKAK). Residues 107–139 (WPFFQEAQKLQAMHREKYPNYKYRPRRKAKMLP) form a sufficient for interaction with EP300 region. An N6-acetyllysine modification is found at lysine 136. Residues 138–155 (LPKNCSLLPADPASVLCS) are necessary for interaction with ZNF208 isoform KRAB-O. Positions 175–204 (RMEHQLGHLPPINAASSPQQRDRYSHWTKL) are disordered. Residues 194–204 (QRDRYSHWTKL) are compositionally biased toward basic and acidic residues. The necessary for interaction with SLC9A3R2 stretch occupies residues 198-204 (YSHWTKL).

It belongs to the SRY family. Interacts with CALM, EP300, HDAC3, KPNB1, ZNF208 isoform KRAB-O, PARP1, SLC9A3R2 and WT1. The interaction with EP300 modulates its DNA-binding activity. The interaction with KPNB1 is sensitive to dissociation by Ran in the GTP-bound form. Interaction with PARP1 impaired its DNA-binding activity. In terms of processing, phosphorylated on serine residues by PKA. Phosphorylation by PKA enhances its DNA-binding activity and stimulates transcription repression. Acetylation of Lys-136 contributes to its nuclear localization and enhances its interaction with KPNB1. Deacetylated by HDAC3. Post-translationally, poly-ADP-ribosylated by PARP1. ADP-ribosylation reduces its DNA-binding activity.

Its subcellular location is the nucleus speckle. It localises to the cytoplasm. It is found in the nucleus. In terms of biological role, transcriptional regulator that controls a genetic switch in male development. It is necessary and sufficient for initiating male sex determination by directing the development of supporting cell precursors (pre-Sertoli cells) as Sertoli rather than granulosa cells. Involved in different aspects of gene regulation including promoter activation or repression. Binds to the DNA consensus sequence 5'-[AT]AACAA[AT]-3'. SRY HMG box recognizes DNA by partial intercalation in the minor groove and promotes DNA bending. Also involved in pre-mRNA splicing. In male adult brain involved in the maintenance of motor functions of dopaminergic neurons. The chain is Sex-determining region Y protein from Homo sapiens (Human).